The sequence spans 301 residues: tRNA-cytidine(32) 2-sulfurtransferase (301 aa).

The PP-loop motif motif lies at 55–60; that stretch reads SGGKDS. Residues cysteine 130, cysteine 133, and cysteine 221 each contribute to the [4Fe-4S] cluster site.

Belongs to the TtcA family. In terms of assembly, homodimer. Mg(2+) serves as cofactor. It depends on [4Fe-4S] cluster as a cofactor.

It localises to the cytoplasm. It catalyses the reaction cytidine(32) in tRNA + S-sulfanyl-L-cysteinyl-[cysteine desulfurase] + AH2 + ATP = 2-thiocytidine(32) in tRNA + L-cysteinyl-[cysteine desulfurase] + A + AMP + diphosphate + H(+). Its pathway is tRNA modification. In terms of biological role, catalyzes the ATP-dependent 2-thiolation of cytidine in position 32 of tRNA, to form 2-thiocytidine (s(2)C32). The sulfur atoms are provided by the cysteine/cysteine desulfurase (IscS) system. The sequence is that of tRNA-cytidine(32) 2-sulfurtransferase from Acinetobacter baylyi (strain ATCC 33305 / BD413 / ADP1).